The chain runs to 209 residues: MVQERQSQGKGVCWTLRLWSAAVISMLLLSTCFIASCVVTYQFIMDQPSRRLYELHTYHSSLTCFSEGTMVSEKMWGCCPNHWKSFGSSCYLISTKENFWSTSEQNCVQMGAHLVVINTEAEQNFITQQLNESLSYFLGLSDPQGNGKWQWIDDTPFSQNVRFWHPHEPNLPEERCVSIVYWNPSKWGWNDVFCDSKHNSICEMKKIYL.

Residues 1–20 (MVQERQSQGKGVCWTLRLWS) lie on the Cytoplasmic side of the membrane. A helical; Signal-anchor for type II membrane protein membrane pass occupies residues 21 to 43 (AAVISMLLLSTCFIASCVVTYQF). Topologically, residues 44–209 (IMDQPSRRLY…SICEMKKIYL (166 aa)) are extracellular. Disulfide bonds link Cys64–Cys78, Cys79–Cys90, Cys107–Cys202, and Cys176–Cys194. Residues 86 to 203 (FGSSCYLIST…CDSKHNSICE (118 aa)) enclose the C-type lectin domain. Ca(2+)-binding residues include Val116, Asn118, and Glu122. N-linked (GlcNAc...) asparagine glycosylation is present at Asn131. Positions 168, 170, and 174 each coordinate Ca(2+). Alpha-D-mannopyranose is bound by residues 168 to 170 (EPN), Glu174, Trp182, and 190 to 191 (ND). Ca(2+) contacts are provided by Asn190, Asp191, and Glu203.

Associated with FCER1G. Heterodimer with CLEC4D; this heterodimer forms a pattern recognition receptor (PRR) against fungal infection. As to expression, expressed by the XS52 DC (dendritic cell) line (at protein level). Expressed constitutively by the epidermis, and skin resident DC appear to be the major source of this expression. Expressed in the spleen and thymus. Expression was undetectable in non-DC lines, including macrophage lines (J774 and Raw), T-cell lines (7-17, HDK-1, and D10), B-cell hybridoma (5C5), a keratinocyte line (Pam 212), and a fibroblast line (NS01).

It localises to the cell membrane. In terms of biological role, calcium-dependent lectin that acts as a pattern recognition receptor (PRR) of the innate immune system: specifically recognizes and binds alpha-mannans on C.albicans hypheas. Binding of C.albicans alpha-mannans to this receptor complex leads to phosphorylation of the immunoreceptor tyrosine-based activation motif (ITAM) of FCER1G, triggering activation of SYK, CARD9 and NF-kappa-B, consequently driving maturation of antigen-presenting cells and shaping antigen-specific priming of T-cells toward effector T-helper 1 and T-helper 17 cell subtypes. Also recognizes, in a mannose-dependent manner, allergens from house dust mite and fungi, by promoting cysteinyl leukotriene production. Recognizes soluble elements from the eggs of Shistosoma mansoni altering adaptive immune responses. The polypeptide is C-type lectin domain family 6 member A (Mus musculus (Mouse)).